A 586-amino-acid chain; its full sequence is Old nuclease (586 aa).

The ATPase domain N-terminus stretch occupies residues Met-1–Thr-163. Asn-34–Ser-38 provides a ligand contact to ATP. The dimerization domain stretch occupies residues Thr-164–Ser-270. The interval Ile-271 to Phe-390 is ATPase domain C-terminus. The toprim domain stretch occupies residues Glu-393–Ile-586. The a divalent metal cation site is built by Glu-398, Glu-402, Asp-453, Asp-455, Asp-541, and Glu-543. Arg-570 serves as the catalytic Stabilizes transition state or protonates leaving group.

It belongs to the class 1 OLD nuclease family. Mg(2+) serves as cofactor.

The catalysed reaction is Exonucleolytic cleavage in the 5'- to 3'-direction to yield nucleoside 5'-phosphates.. In terms of biological role, an exonuclease that acts preferentially on linear dsDNA, processively degrading it from 5'-3', releasing 5'-phosphomononucleotides. Initiates on 5'-phosphate and 5'-hydroxyl ends. Also acts on linear ssDNA, nicked DNA and RNA. ATP enhances but is not necessary for exonuclease activity; has ATPase activity that is not stimulated by DNA. The old protein kills E.coli recB and recC mutants and interferes with phage lambda growth. Both the exonuclease and ATPase activities are required in vivo. Probably interferes with lambda phage by degrading its linear DNA. Isolated as a mutant able to lysogenize E.coli strain C cells normally not susceptible to lysis by phage P2. This Enterobacteriaceae (Bacteriophage P2) protein is Old nuclease.